The chain runs to 185 residues: Ribosome-recycling factor (185 aa).

The protein belongs to the RRF family.

It is found in the cytoplasm. Responsible for the release of ribosomes from messenger RNA at the termination of protein biosynthesis. May increase the efficiency of translation by recycling ribosomes from one round of translation to another. The protein is Ribosome-recycling factor of Streptococcus pyogenes serotype M28 (strain MGAS6180).